The chain runs to 609 residues: UvrABC system protein C (609 aa).

Residues 13 to 91 (HQPGVYRMFD…IKAFQPRYNV (79 aa)) enclose the GIY-YIG domain. A UVR domain is found at 201 to 236 (QQVLEHLIKKMEQASMQLNFEQAAYFRDQIQAIRAV).

Belongs to the UvrC family. As to quaternary structure, interacts with UvrB in an incision complex.

The protein localises to the cytoplasm. Its function is as follows. The UvrABC repair system catalyzes the recognition and processing of DNA lesions. UvrC both incises the 5' and 3' sides of the lesion. The N-terminal half is responsible for the 3' incision and the C-terminal half is responsible for the 5' incision. In Histophilus somni (strain 129Pt) (Haemophilus somnus), this protein is UvrABC system protein C.